Reading from the N-terminus, the 409-residue chain is Elongation factor Tu, chloroplastic (409 aa).

In terms of domain architecture, tr-type G spans 10–214 (KPHVNIGTIG…AVDAYIPTPE (205 aa)). Residues 19–26 (GHVDHGKT) form a G1 region. Position 19-26 (19-26 (GHVDHGKT)) interacts with GTP. Residue Thr26 participates in Mg(2+) binding. A G2 region spans residues 60–64 (GITIN). The interval 81–84 (DCPG) is G3. GTP is bound by residues 81–85 (DCPGH) and 136–139 (NKQD). Residues 136 to 139 (NKQD) are G4. Residues 174-176 (SAL) form a G5 region.

It belongs to the TRAFAC class translation factor GTPase superfamily. Classic translation factor GTPase family. EF-Tu/EF-1A subfamily.

The protein resides in the plastid. It localises to the chloroplast. The enzyme catalyses GTP + H2O = GDP + phosphate + H(+). Its function is as follows. GTP hydrolase that promotes the GTP-dependent binding of aminoacyl-tRNA to the A-site of ribosomes during protein biosynthesis. This Thalassiosira pseudonana (Marine diatom) protein is Elongation factor Tu, chloroplastic (tufA).